Reading from the N-terminus, the 147-residue chain is Hemoglobin subunit epsilon (147 aa).

Residues 3–147 form the Globin domain; it reads HFTAEEKSTI…VATALAHKYH (145 aa). Phosphoserine is present on residues S14 and S51. Residues H64 and H93 each contribute to the heme b site.

It belongs to the globin family. As to quaternary structure, heterotetramer of two alpha chains and two epsilon chains in early embryonic hemoglobin Gower-2; two zeta chains and two epsilon chains in early embryonic hemoglobin Gower-1. Red blood cells.

Functionally, the epsilon chain is a beta-type chain of early mammalian embryonic hemoglobin. This chain is Hemoglobin subunit epsilon (HBE1), found in Propithecus verreauxi (White sifaka).